Here is a 491-residue protein sequence, read N- to C-terminus: Probable Xaa-Pro aminopeptidase An01g13040 (491 aa).

Mn(2+) is bound by residues D276, D287, E420, and E459.

This sequence belongs to the peptidase M24B family. The cofactor is Mn(2+).

It catalyses the reaction Release of any N-terminal amino acid, including proline, that is linked to proline, even from a dipeptide or tripeptide.. Its function is as follows. Catalyzes the removal of a penultimate prolyl residue from the N-termini of peptides. The protein is Probable Xaa-Pro aminopeptidase An01g13040 of Aspergillus niger (strain ATCC MYA-4892 / CBS 513.88 / FGSC A1513).